A 728-amino-acid polypeptide reads, in one-letter code: Catalase-peroxidase 2 (728 aa).

The disordered stretch occupies residues 1-20 (MSNEGKCPFNHGKRNGTTNR). The tryptophyl-tyrosyl-methioninium (Trp-Tyr) (with M-240) cross-link spans 91–214 (WHSAGTYRTG…LAAVQMGLIY (124 aa)). H92 (proton acceptor) is an active-site residue. The segment at residues 214–240 (YVNPEGPNGNPDPLASARDIRETFARM) is a cross-link (tryptophyl-tyrosyl-methioninium (Tyr-Met) (with W-91)). Residue H255 participates in heme b binding. The segment at 335 to 355 (AHQWQPKGGAGADSVPDPFEP) is disordered.

Belongs to the peroxidase family. Peroxidase/catalase subfamily. As to quaternary structure, homodimer or homotetramer. Requires heme b as cofactor. In terms of processing, formation of the three residue Trp-Tyr-Met cross-link is important for the catalase, but not the peroxidase activity of the enzyme.

The enzyme catalyses H2O2 + AH2 = A + 2 H2O. It catalyses the reaction 2 H2O2 = O2 + 2 H2O. Bifunctional enzyme with both catalase and broad-spectrum peroxidase activity. In Burkholderia cenocepacia (strain HI2424), this protein is Catalase-peroxidase 2.